We begin with the raw amino-acid sequence, 289 residues long: Diaminopimelate epimerase (289 aa).

Positions 11 and 78 each coordinate substrate. C87 functions as the Proton donor in the catalytic mechanism. Substrate-binding positions include 88 to 89 (GN), N163, N199, and 217 to 218 (ER). The Proton acceptor role is filled by C226. Substrate is bound at residue 227–228 (GT).

It belongs to the diaminopimelate epimerase family. As to quaternary structure, homodimer.

The protein localises to the cytoplasm. It catalyses the reaction (2S,6S)-2,6-diaminopimelate = meso-2,6-diaminopimelate. It participates in amino-acid biosynthesis; L-lysine biosynthesis via DAP pathway; DL-2,6-diaminopimelate from LL-2,6-diaminopimelate: step 1/1. In terms of biological role, catalyzes the stereoinversion of LL-2,6-diaminopimelate (L,L-DAP) to meso-diaminopimelate (meso-DAP), a precursor of L-lysine and an essential component of the bacterial peptidoglycan. The chain is Diaminopimelate epimerase from Mycolicibacterium gilvum (strain PYR-GCK) (Mycobacterium gilvum (strain PYR-GCK)).